Reading from the N-terminus, the 226-residue chain is NAD(P)H-hydrate epimerase (226 aa).

One can recognise a YjeF N-terminal domain in the interval 10–215 (AIELDLDLFE…ALQRKYQLNL (206 aa)). 58–62 (NNGGD) contacts (6S)-NADPHX. Residues Asn59 and Asp123 each contribute to the K(+) site. (6S)-NADPHX contacts are provided by residues 127–133 (GFGFKPP) and Asp156. Residue Ser159 coordinates K(+).

Belongs to the NnrE/AIBP family. Requires K(+) as cofactor.

It catalyses the reaction (6R)-NADHX = (6S)-NADHX. The enzyme catalyses (6R)-NADPHX = (6S)-NADPHX. Catalyzes the epimerization of the S- and R-forms of NAD(P)HX, a damaged form of NAD(P)H that is a result of enzymatic or heat-dependent hydration. This is a prerequisite for the S-specific NAD(P)H-hydrate dehydratase to allow the repair of both epimers of NAD(P)HX. This chain is NAD(P)H-hydrate epimerase, found in Drosophila persimilis (Fruit fly).